Consider the following 173-residue polypeptide: Large ribosomal subunit protein uL10 (173 aa).

This sequence belongs to the universal ribosomal protein uL10 family. In terms of assembly, part of the ribosomal stalk of the 50S ribosomal subunit. The N-terminus interacts with L11 and the large rRNA to form the base of the stalk. The C-terminus forms an elongated spine to which L12 dimers bind in a sequential fashion forming a multimeric L10(L12)X complex.

In terms of biological role, forms part of the ribosomal stalk, playing a central role in the interaction of the ribosome with GTP-bound translation factors. In Corynebacterium aurimucosum (strain ATCC 700975 / DSM 44827 / CIP 107346 / CN-1) (Corynebacterium nigricans), this protein is Large ribosomal subunit protein uL10.